The following is a 472-amino-acid chain: ATP-dependent rRNA helicase rrp3 (472 aa).

Residues 1-52 (MRDVKKRKIAHEAPEHGSDTESTSSHKSVAQQDDPLETQDEATATESRPAPK) form a disordered region. Basic and acidic residues predominate over residues 10–19 (AHEAPEHGSD). The segment covering 20 to 31 (TESTSSHKSVAQ) has biased composition (polar residues). Positions 52–80 (KSFKDLGIIDQLCEACETMGYKAPTPIQA) match the Q motif motif. A Helicase ATP-binding domain is found at 83–254 (IPLALQGRDL…RASLSNPLRV (172 aa)). 96 to 103 (AETGSGKT) serves as a coordination point for ATP. The DEAD box motif lies at 202 to 205 (DEAD). The region spanning 282–426 (YLVYLLNEFV…EYELEKDEVM (145 aa)) is the Helicase C-terminal domain. Residues 444–472 (KNFDEKRGTKAKKFGKGKRSRDEMDQEEG) are disordered. A compositionally biased stretch (basic residues) spans 452–462 (TKAKKFGKGKR).

It belongs to the DEAD box helicase family. DDX47/RRP3 subfamily. Interacts with the SSU processome.

The protein localises to the nucleus. It carries out the reaction ATP + H2O = ADP + phosphate + H(+). Its function is as follows. ATP-dependent rRNA helicase required for pre-ribosomal RNA processing. Involved in the maturation of the 35S-pre-rRNA and to its cleavage to mature 18S rRNA. In Aspergillus fumigatus (strain ATCC MYA-4609 / CBS 101355 / FGSC A1100 / Af293) (Neosartorya fumigata), this protein is ATP-dependent rRNA helicase rrp3.